Here is a 185-residue protein sequence, read N- to C-terminus: Ribosome-recycling factor (185 aa).

This sequence belongs to the RRF family.

It localises to the cytoplasm. Responsible for the release of ribosomes from messenger RNA at the termination of protein biosynthesis. May increase the efficiency of translation by recycling ribosomes from one round of translation to another. The protein is Ribosome-recycling factor of Geobacillus kaustophilus (strain HTA426).